The sequence spans 629 residues: Hemocyanin F chain (629 aa).

Cu cation contacts are provided by His172, His176, His203, His324, His328, and His364. 2 N-linked (GlcNAc...) asparagine glycosylation sites follow: Asn395 and Asn447. Over residues 503–513 the composition is skewed to polar residues; sequence SESSVTVSHTP. Residues 503–522 are disordered; it reads SESSVTVSHTPTFEELQRGE. The N-linked (GlcNAc...) asparagine glycan is linked to Asn527. An intrachain disulfide couples Cys534 to Cys582. Asn615 carries an N-linked (GlcNAc...) asparagine glycan.

It belongs to the tyrosinase family. Hemocyanin subfamily. As to quaternary structure, tarantula hemocyanin is a 24-chain polymer with seven different chains identified. As to expression, hemolymph.

The protein resides in the secreted. The protein localises to the extracellular space. Functionally, hemocyanins are copper-containing oxygen carriers occurring freely dissolved in the hemolymph of many mollusks and arthropods. In Aphonopelma sp. (American tarantula), this protein is Hemocyanin F chain (HCF).